We begin with the raw amino-acid sequence, 352 residues long: Dolichol-phosphate mannosyltransferase (352 aa).

At 1–229 (MKVSVIIPTY…HIYRLMKWEG (229 aa)) the chain is on the cytoplasmic side. GDP-alpha-D-mannose-binding residues include Pro8, Tyr10, Glu12, Val37, Asp39, Asp89, Ala90, Asp91, Gln93, Arg117, Val156, Lys178, Arg202, and Lys208. Mg(2+) is bound by residues Asp91 and Gln93. Asp91 and Gln93 together coordinate Mn(2+). Residues 230 to 256 (EIDRIVKFSIVGLSGILVNEGFLWLFV) traverse the membrane as a helical segment. Topologically, residues 257–261 (NLGIP) are extracellular. The chain crosses the membrane as a helical span at residues 262-286 (KEIAVIPAVELSILNNFFWNDIWTF). At 287 to 293 (KDIRRGS) the chain is on the cytoplasmic side. Residues 294–320 (IFSRLLKFHIAALSGAVVNFIVYWILL) traverse the membrane as a helical segment. Topologically, residues 321-325 (FLGIH) are extracellular. The chain crosses the membrane as a helical span at residues 326-350 (YLIANLVGIVLSFGVRYVINRHVTW). Over 351 to 352 (AT) the chain is Cytoplasmic.

It belongs to the glycosyltransferase 2 family. It depends on Mg(2+) as a cofactor. The cofactor is Mn(2+). Ca(2+) is required as a cofactor.

It is found in the cell membrane. The catalysed reaction is a di-trans,poly-cis-dolichyl phosphate + GDP-alpha-D-mannose = a di-trans,poly-cis-dolichyl beta-D-mannosyl phosphate + GDP. Its pathway is protein modification; protein glycosylation. In terms of biological role, transfers mannose from GDP-mannose to dolichol monophosphate to form dolichol phosphate mannose (Dol-P-Man) which is the mannosyl donor in pathways leading to N-glycosylation, glycosyl phosphatidylinositol membrane anchoring, and O-mannosylation of proteins. The polypeptide is Dolichol-phosphate mannosyltransferase (Pyrococcus furiosus (strain ATCC 43587 / DSM 3638 / JCM 8422 / Vc1)).